We begin with the raw amino-acid sequence, 476 residues long: Small ribosomal subunit protein mS29 (476 aa).

The N-terminal 54 residues, 1–54 (MLPKFRSRSSIIKNTERISNILSGGKLTVCGSKLGGLYTFEKCTFNKYYSSSQY), are a transit peptide targeting the mitochondrion. The tract at residues 58–97 (GRPVGGNIHSSSNQQRQKNSEAPRINEIPPSTSSVEKSTT) is disordered. Composition is skewed to polar residues over residues 65-74 (IHSSSNQQRQ) and 86-97 (PPSTSSVEKSTT). 200-207 (GAPGSGRS) serves as a coordination point for ATP.

Belongs to the mitochondrion-specific ribosomal protein mS29 family. As to quaternary structure, component of the mitochondrial small ribosomal subunit (mt-SSU). Mature yeast 74S mitochondrial ribosomes consist of a small (37S) and a large (54S) subunit. The 37S small subunit contains a 15S ribosomal RNA (15S mt-rRNA) and at least 32 different proteins. The 54S large subunit contains a 21S rRNA (21S mt-rRNA) and at least 45 different proteins.

It localises to the mitochondrion. Component of the mitochondrial ribosome (mitoribosome), a dedicated translation machinery responsible for the synthesis of mitochondrial genome-encoded proteins, including at least some of the essential transmembrane subunits of the mitochondrial respiratory chain. The mitoribosomes are attached to the mitochondrial inner membrane and translation products are cotranslationally integrated into the membrane. mS29 binds GTP and is probably an active GTPase. GTP hydrolysis may be linked to subunit association. mS29 also has an extraribosomal function, being required for maintenance of mitochondrial DNA. This Schizosaccharomyces pombe (strain 972 / ATCC 24843) (Fission yeast) protein is Small ribosomal subunit protein mS29 (rsm23).